Reading from the N-terminus, the 75-residue chain is U6-lycotoxin-Ls1a (75 aa).

A signal peptide spans 1 to 21; the sequence is MKLLLFTALVLVVISLIEVEA. Positions 22–25 are excised as a propeptide; sequence ENER.

It belongs to the neurotoxin 19 (CSTX) family. 06 (U6-Lctx) subfamily. Post-translationally, contains 4 disulfide bonds. In terms of tissue distribution, expressed by the venom gland.

It is found in the secreted. The chain is U6-lycotoxin-Ls1a from Lycosa singoriensis (Wolf spider).